We begin with the raw amino-acid sequence, 231 residues long: LexA repressor (231 aa).

Residues 1–24 are disordered; sequence MTDRKEHKMKPGRRPTEGMTPSQE. The H-T-H motif DNA-binding region spans 43–62; the sequence is VKEIAEALGMKTPSAHEQVQ. Catalysis depends on for autocatalytic cleavage activity residues serine 146 and lysine 183.

Belongs to the peptidase S24 family. Homodimer.

The enzyme catalyses Hydrolysis of Ala-|-Gly bond in repressor LexA.. Represses a number of genes involved in the response to DNA damage (SOS response), including recA and lexA. In the presence of single-stranded DNA, RecA interacts with LexA causing an autocatalytic cleavage which disrupts the DNA-binding part of LexA, leading to derepression of the SOS regulon and eventually DNA repair. The chain is LexA repressor from Magnetococcus marinus (strain ATCC BAA-1437 / JCM 17883 / MC-1).